Here is a 417-residue protein sequence, read N- to C-terminus: Gamma-glutamyl phosphate reductase (417 aa).

Belongs to the gamma-glutamyl phosphate reductase family.

The protein localises to the cytoplasm. It catalyses the reaction L-glutamate 5-semialdehyde + phosphate + NADP(+) = L-glutamyl 5-phosphate + NADPH + H(+). The protein operates within amino-acid biosynthesis; L-proline biosynthesis; L-glutamate 5-semialdehyde from L-glutamate: step 2/2. Catalyzes the NADPH-dependent reduction of L-glutamate 5-phosphate into L-glutamate 5-semialdehyde and phosphate. The product spontaneously undergoes cyclization to form 1-pyrroline-5-carboxylate. This Clostridium novyi (strain NT) protein is Gamma-glutamyl phosphate reductase.